The primary structure comprises 89 residues: UPF0237 protein CA_C0478 (89 aa).

The region spanning I4 to Q78 is the ACT domain.

The protein belongs to the UPF0237 family.

This chain is UPF0237 protein CA_C0478, found in Clostridium acetobutylicum (strain ATCC 824 / DSM 792 / JCM 1419 / IAM 19013 / LMG 5710 / NBRC 13948 / NRRL B-527 / VKM B-1787 / 2291 / W).